The following is a 355-amino-acid chain: Protein RecA (355 aa).

72–79 provides a ligand contact to ATP; sequence GPESSGKT.

This sequence belongs to the RecA family.

Its subcellular location is the cytoplasm. Its function is as follows. Can catalyze the hydrolysis of ATP in the presence of single-stranded DNA, the ATP-dependent uptake of single-stranded DNA by duplex DNA, and the ATP-dependent hybridization of homologous single-stranded DNAs. It interacts with LexA causing its activation and leading to its autocatalytic cleavage. The sequence is that of Protein RecA from Thermosynechococcus vestitus (strain NIES-2133 / IAM M-273 / BP-1).